The primary structure comprises 109 residues: Nucleoid-associated protein Psyc_0793 (109 aa).

Belongs to the YbaB/EbfC family. As to quaternary structure, homodimer.

It localises to the cytoplasm. The protein resides in the nucleoid. Functionally, binds to DNA and alters its conformation. May be involved in regulation of gene expression, nucleoid organization and DNA protection. This chain is Nucleoid-associated protein Psyc_0793, found in Psychrobacter arcticus (strain DSM 17307 / VKM B-2377 / 273-4).